Reading from the N-terminus, the 88-residue chain is Large ribosomal subunit protein bL31B (88 aa).

The protein belongs to the bacterial ribosomal protein bL31 family. Type B subfamily. As to quaternary structure, part of the 50S ribosomal subunit.

This chain is Large ribosomal subunit protein bL31B, found in Pasteurella multocida (strain Pm70).